We begin with the raw amino-acid sequence, 342 residues long: D-erythrose-4-phosphate dehydrogenase (342 aa).

An NAD(+)-binding site is contributed by 12–13 (RI). Residues 154-156 (SCT), Arg200, 213-214 (TK), and Arg236 contribute to the substrate site. Catalysis depends on Cys155, which acts as the Nucleophile. Asn318 is an NAD(+) binding site.

The protein belongs to the glyceraldehyde-3-phosphate dehydrogenase family. Epd subfamily. Homotetramer.

It localises to the cytoplasm. The enzyme catalyses D-erythrose 4-phosphate + NAD(+) + H2O = 4-phospho-D-erythronate + NADH + 2 H(+). It participates in cofactor biosynthesis; pyridoxine 5'-phosphate biosynthesis; pyridoxine 5'-phosphate from D-erythrose 4-phosphate: step 1/5. Functionally, catalyzes the NAD-dependent conversion of D-erythrose 4-phosphate to 4-phosphoerythronate. This is D-erythrose-4-phosphate dehydrogenase from Klebsiella pneumoniae (strain 342).